The following is a 353-amino-acid chain: Abasic site processing protein HMCES (353 aa).

Residue Cys2 is the Nucleophile of the active site. At Cys2 the chain carries Thiazolidine linkage to a ring-opened DNA abasic site. Residue Glu127 is part of the active site. Residues Lys148 and Lys151 each participate in a glycyl lysine isopeptide (Lys-Gly) (interchain with G-Cter in SUMO2) cross-link. Ser160 is subject to Phosphoserine. Glycyl lysine isopeptide (Lys-Gly) (interchain with G-Cter in SUMO2) cross-links involve residues Lys274 and Lys275. The disordered stretch occupies residues Thr292–Ser353. Residue Ser294 is modified to Phosphoserine. The span at Pro295–Ala307 shows a compositional bias: basic and acidic residues. A Glycyl lysine isopeptide (Lys-Gly) (interchain with G-Cter in SUMO2) cross-link involves residue Lys305. The residue at position 321 (Ser321) is a Phosphoserine. A PIP-box motif is present at residues Ser332 to Leu338. The span at Arg336–Ser353 shows a compositional bias: basic and acidic residues. Residues Lys339 and Lys342 each participate in a glycyl lysine isopeptide (Lys-Gly) (interchain with G-Cter in SUMO2) cross-link.

The protein belongs to the SOS response-associated peptidase family. In terms of assembly, interacts (via PIP-box motif) with PCNA. Post-translationally, ubiquitinated; the covalent HMCES DNA-protein cross-link is ubiquitinated, leading to its degradation by the proteasome.

It localises to the chromosome. With respect to regulation, formation and reversal of DNA-protein cross-link depends on DNA context. Catalyzes formation of the thiazolidine linkage in presence of abasic sites in single-stranded DNA. Mediates the reversal of the thiazolidine cross-link in presence of double stranded DNA. Functionally, sensor of abasic sites in single-stranded DNA (ssDNA) required to preserve genome integrity by promoting error-free repair of abasic sites. Acts as an enzyme that recognizes and binds abasic sites in ssDNA at replication forks and chemically modifies the lesion by forming a covalent cross-link with DNA: forms a stable thiazolidine linkage between a ring-opened abasic site and the alpha-amino and sulfhydryl substituents of its N-terminal catalytic cysteine residue. Promotes error-free repair by protecting abasic sites from translesion synthesis (TLS) polymerases and endonucleases that are error-prone and would generate mutations and double-strand breaks. The HMCES DNA-protein cross-link is then either reversed or degraded. HMCES is able to catalyze the reversal of its thiazolidine cross-link and cycle between a cross-link and a non-cross-linked state depending on DNA context: mediates self-reversal of the thiazolidine cross-link in double stranded DNA, allowing APEX1 to initiate downstream repair of abasic sites. The HMCES DNA-protein cross-link can also be degraded by the SPRTN metalloprotease following unfolding by the BRIP1/FANCJ helicase. Has preference for ssDNA, but can also accommodate double-stranded DNA with 3' or 5' overhang (dsDNA), and dsDNA-ssDNA 3' junction. Plays a protective role during somatic hypermutation of immunoglobulin genes in B-cells: acts via its ability to form covalent cross-links with abasic sites, thereby limiting the accumulation of deletions in somatic hypermutation target regions. Also involved in class switch recombination (CSR) in B-cells independently of the formation of a DNA-protein cross-link: acts by binding and protecting ssDNA overhangs to promote DNA double-strand break repair through the microhomology-mediated alternative-end-joining (Alt-EJ) pathway. Acts as a protease: mediates autocatalytic processing of its N-terminal methionine in order to expose the catalytic cysteine. This Rattus norvegicus (Rat) protein is Abasic site processing protein HMCES.